The chain runs to 298 residues: Cholesterol 25-hydroxylase (298 aa).

Residue N5 is glycosylated (N-linked (GlcNAc...) asparagine). A run of 3 helical transmembrane segments spans residues 38 to 58 (IFPV…FVVL), 88 to 108 (LGLT…LHWV), and 124 to 144 (LLSH…AWHL). Residues 128 to 263 (VLICLLLFDT…FTHWDKMLGT (136 aa)) enclose the Fatty acid hydroxylase domain. Residues 142–146 (WHLLH) carry the Histidine box-1 motif. A Histidine box-2 motif is present at residues 157–161 (HKVHH). N-linked (GlcNAc...) asparagine glycosylation is present at N163. Positions 238–244 (HHDMHHS) match the Histidine box-3 motif.

Belongs to the sterol desaturase family. Fe cation serves as cofactor. In terms of processing, N-glycosylated. In terms of tissue distribution, widely expressed at low level and at higher level in the lung. Weakly expressed in the heart, lung and kidney.

It is found in the endoplasmic reticulum membrane. The catalysed reaction is cholesterol + AH2 + O2 = 25-hydroxycholesterol + A + H2O. It carries out the reaction cholesterol + NADPH + O2 + H(+) = 25-hydroxycholesterol + NADP(+) + H2O. Its function is as follows. Catalyzes the formation of 25-hydroxycholesterol from cholesterol, leading to repress cholesterol biosynthetic enzymes. Plays a key role in cell positioning and movement in lymphoid tissues: 25-hydroxycholesterol is an intermediate in biosynthesis of 7-alpha,25-dihydroxycholesterol (7-alpha,25-OHC), an oxysterol that acts as a ligand for the G protein-coupled receptor GPR183/EBI2, a chemotactic receptor for a number of lymphoid cells. May play an important role in regulating lipid metabolism by synthesizing a corepressor that blocks sterol regulatory element binding protein (SREBP) processing. In testis, production of 25-hydroxycholesterol by macrophages may play a role in Leydig cell differentiation. Required to restrain inflammation in macrophages: production of 25-hydroxycholesterol protects macrophages from cholesterol overload, thereby preventing mitochondrial DNA release and subsequent activation of the AIM2 inflammasome. Interferon-stimulated gene which has broad antiviral activities against a wide range of enveloped viruses. The protein is Cholesterol 25-hydroxylase of Mus musculus (Mouse).